A 379-amino-acid chain; its full sequence is UDP-4-amino-4-deoxy-L-arabinose--oxoglutarate aminotransferase (379 aa).

Lys182 carries the post-translational modification N6-(pyridoxal phosphate)lysine.

Belongs to the DegT/DnrJ/EryC1 family. ArnB subfamily. In terms of assembly, homodimer. Requires pyridoxal 5'-phosphate as cofactor.

The enzyme catalyses UDP-4-amino-4-deoxy-beta-L-arabinose + 2-oxoglutarate = UDP-beta-L-threo-pentopyranos-4-ulose + L-glutamate. It functions in the pathway nucleotide-sugar biosynthesis; UDP-4-deoxy-4-formamido-beta-L-arabinose biosynthesis; UDP-4-deoxy-4-formamido-beta-L-arabinose from UDP-alpha-D-glucuronate: step 2/3. The protein operates within bacterial outer membrane biogenesis; lipopolysaccharide biosynthesis. Catalyzes the conversion of UDP-4-keto-arabinose (UDP-Ara4O) to UDP-4-amino-4-deoxy-L-arabinose (UDP-L-Ara4N). The modified arabinose is attached to lipid A and is required for resistance to polymyxin and cationic antimicrobial peptides. This Salmonella schwarzengrund (strain CVM19633) protein is UDP-4-amino-4-deoxy-L-arabinose--oxoglutarate aminotransferase.